The primary structure comprises 364 residues: Zinc finger protein CONSTANS-LIKE 12 (364 aa).

Residues Cys5, Cys8, Cys28, and His33 each contribute to the Zn(2+) site. The B box-type 1; atypical zinc finger occupies 5 to 47 (CDHCATSQALIYCKSDLAKLCLNCDVHVHSANPLSHRHIRSLI). The B box-type 2; degenerate zinc finger occupies 48–88 (CEKCFSQPAAIRCLDEKVSYCQGCHWHESNCSELGHRVQSL). In terms of domain architecture, CCT spans 280–322 (QDCGMSPGFIMSEAPWETNFEVSCPQARNEAKLRYKEKKLKRS).

It belongs to the CONSTANS family.

It localises to the nucleus. This is Zinc finger protein CONSTANS-LIKE 12 (COL12) from Arabidopsis thaliana (Mouse-ear cress).